The sequence spans 453 residues: UDP-N-acetylmuramoylalanine--D-glutamate ligase (453 aa).

ATP is bound at residue 119-125 (GTNGKTT).

It belongs to the MurCDEF family.

It is found in the cytoplasm. It carries out the reaction UDP-N-acetyl-alpha-D-muramoyl-L-alanine + D-glutamate + ATP = UDP-N-acetyl-alpha-D-muramoyl-L-alanyl-D-glutamate + ADP + phosphate + H(+). The protein operates within cell wall biogenesis; peptidoglycan biosynthesis. Its function is as follows. Cell wall formation. Catalyzes the addition of glutamate to the nucleotide precursor UDP-N-acetylmuramoyl-L-alanine (UMA). The chain is UDP-N-acetylmuramoylalanine--D-glutamate ligase from Syntrophus aciditrophicus (strain SB).